Here is a 136-residue protein sequence, read N- to C-terminus: MIPGEIITKSTEVEINNHHPETVIEVENTGDRPIQVGSHFHFYEANAALDFEREMAYGKHLDIPAGAAVRFEPGDKKEVQLVEYAGKRKIFGFRGMVNGPIDESRVYRPTDENDAYAGVFGDNGAENVNKKGGKRS.

The protein belongs to the urease beta subunit family. As to quaternary structure, heterotrimer of UreA (gamma), UreB (beta) and UreC (alpha) subunits. Three heterotrimers associate to form the active enzyme.

It localises to the cytoplasm. The catalysed reaction is urea + 2 H2O + H(+) = hydrogencarbonate + 2 NH4(+). It functions in the pathway nitrogen metabolism; urea degradation; CO(2) and NH(3) from urea (urease route): step 1/1. The chain is Urease subunit beta from Staphylococcus aureus (strain Mu3 / ATCC 700698).